The following is a 285-amino-acid chain: Aldo-keto reductase (285 aa).

An NADP(+)-binding site is contributed by alanine 165 to lysine 175.

The protein belongs to the aldo/keto reductase family. Aldo/keto reductase 2 subfamily.

The protein is Aldo-keto reductase of Babesia bovis.